The sequence spans 373 residues: Packaging protein 3 (373 aa).

Positions 1-32 (MHPVLRQMRPQPRATTASAAVALSGSGEQEEP) are disordered. The tract at residues 1-150 (MHPVLRQMRP…VTEERNFQKS (150 aa)) is interaction with packaging protein 1. A phosphoserine; by host mark is found at Ser52 and Ser334.

Belongs to the adenoviridae packaging protein 3 family. Part of the genome packaging complex composed of packaging proteins 1, 2 and 3; this complex specifically binds to the packaging sequence on the left end of viral genomic DNA and performs packaging of the viral genome. Interacts with hexon-linking protein IIIa; this interaction is required to promote correct genome packaging. Cleaved at different sites by the viral protease during virion maturation.

The protein localises to the host nucleus. Its function is as follows. Involved in viral genome packaging through its interaction with packaging proteins 1 and 2. After proteolytic cleavage by adenovirus protease, L1 52/55k protein is removed from the capsid during viral maturation. This chain is Packaging protein 3, found in Homo sapiens (Human).